The sequence spans 342 residues: Isopentenyl-diphosphate delta-isomerase (342 aa).

11–12 (RK) is a substrate binding site. Residues S68, 69 to 71 (SMT), S99, and N127 each bind FMN. Position 99–101 (99–101 (SMR)) interacts with substrate. Position 162 (Q162) interacts with substrate. E163 is a binding site for Mg(2+). FMN contacts are provided by residues K194, T224, 274 to 276 (GLK), and 295 to 296 (AG).

The protein belongs to the IPP isomerase type 2 family. As to quaternary structure, homooctamer. Dimer of tetramers. FMN is required as a cofactor. Requires NADPH as cofactor. It depends on Mg(2+) as a cofactor.

It is found in the cytoplasm. The enzyme catalyses isopentenyl diphosphate = dimethylallyl diphosphate. Involved in the biosynthesis of isoprenoids. Catalyzes the 1,3-allylic rearrangement of the homoallylic substrate isopentenyl (IPP) to its allylic isomer, dimethylallyl diphosphate (DMAPP). This chain is Isopentenyl-diphosphate delta-isomerase, found in Rickettsia canadensis (strain McKiel).